A 676-amino-acid polypeptide reads, in one-letter code: Methionine--tRNA ligase (676 aa).

Positions Pro15 to His25 match the 'HIGH' region motif. Residues Cys146, Cys149, Cys159, and Cys162 each coordinate Zn(2+). The 'KMSKS' region motif lies at Lys332 to Ser336. Lys335 contributes to the ATP binding site. The tRNA-binding domain maps to Asp574–Lys676.

The protein belongs to the class-I aminoacyl-tRNA synthetase family. MetG type 1 subfamily. In terms of assembly, homodimer. The cofactor is Zn(2+).

It localises to the cytoplasm. It carries out the reaction tRNA(Met) + L-methionine + ATP = L-methionyl-tRNA(Met) + AMP + diphosphate. Functionally, is required not only for elongation of protein synthesis but also for the initiation of all mRNA translation through initiator tRNA(fMet) aminoacylation. This is Methionine--tRNA ligase from Pectobacterium atrosepticum (strain SCRI 1043 / ATCC BAA-672) (Erwinia carotovora subsp. atroseptica).